We begin with the raw amino-acid sequence, 267 residues long: Tryptophan synthase alpha chain (267 aa).

Catalysis depends on proton acceptor residues glutamate 43 and aspartate 54.

It belongs to the TrpA family. As to quaternary structure, tetramer of two alpha and two beta chains.

The enzyme catalyses (1S,2R)-1-C-(indol-3-yl)glycerol 3-phosphate + L-serine = D-glyceraldehyde 3-phosphate + L-tryptophan + H2O. It participates in amino-acid biosynthesis; L-tryptophan biosynthesis; L-tryptophan from chorismate: step 5/5. Its function is as follows. The alpha subunit is responsible for the aldol cleavage of indoleglycerol phosphate to indole and glyceraldehyde 3-phosphate. In Bacillus pumilus (strain SAFR-032), this protein is Tryptophan synthase alpha chain.